A 258-amino-acid chain; its full sequence is NAD kinase (258 aa).

Residue aspartate 45 is the Proton acceptor of the active site. NAD(+)-binding positions include 45–46 (DG), 117–118 (NE), aspartate 147, alanine 155, 158–163 (TAYNYS), and alanine 182.

It belongs to the NAD kinase family. The cofactor is a divalent metal cation.

It is found in the cytoplasm. The enzyme catalyses NAD(+) + ATP = ADP + NADP(+) + H(+). In terms of biological role, involved in the regulation of the intracellular balance of NAD and NADP, and is a key enzyme in the biosynthesis of NADP. Catalyzes specifically the phosphorylation on 2'-hydroxyl of the adenosine moiety of NAD to yield NADP. In Xanthomonas campestris pv. campestris (strain 8004), this protein is NAD kinase.